We begin with the raw amino-acid sequence, 150 residues long: Macrodomain Ter protein (150 aa).

This sequence belongs to the MatP family. As to quaternary structure, homodimer.

It localises to the cytoplasm. Required for spatial organization of the terminus region of the chromosome (Ter macrodomain) during the cell cycle. Prevents early segregation of duplicated Ter macrodomains during cell division. Binds specifically to matS, which is a 13 bp signature motif repeated within the Ter macrodomain. In Shigella dysenteriae serotype 1 (strain Sd197), this protein is Macrodomain Ter protein.